The following is a 261-amino-acid chain: Hemin import ATP-binding protein HmuV (261 aa).

An ABC transporter domain is found at 5-241; it reads YTAENLTFTR…DALAHWYGAQ (237 aa). Residue 37–44 coordinates ATP; that stretch reads GPNGAGKS.

This sequence belongs to the ABC transporter superfamily. Heme (hemin) importer (TC 3.A.1.14.5) family. In terms of assembly, the complex is composed of two ATP-binding proteins (HmuV), two transmembrane proteins (HmuU) and a solute-binding protein (HmuT).

The protein localises to the cell inner membrane. In terms of biological role, part of the ABC transporter complex HmuTUV involved in hemin import. Responsible for energy coupling to the transport system. This chain is Hemin import ATP-binding protein HmuV, found in Enterobacter cloacae.